The chain runs to 202 residues: ATP-dependent Clp protease proteolytic subunit (202 aa).

The active-site Nucleophile is S101. Residue H126 is part of the active site.

Belongs to the peptidase S14 family. As to quaternary structure, component of the chloroplastic Clp protease core complex.

The protein resides in the plastid. It localises to the chloroplast stroma. It catalyses the reaction Hydrolysis of proteins to small peptides in the presence of ATP and magnesium. alpha-casein is the usual test substrate. In the absence of ATP, only oligopeptides shorter than five residues are hydrolyzed (such as succinyl-Leu-Tyr-|-NHMec, and Leu-Tyr-Leu-|-Tyr-Trp, in which cleavage of the -Tyr-|-Leu- and -Tyr-|-Trp bonds also occurs).. Its function is as follows. Cleaves peptides in various proteins in a process that requires ATP hydrolysis. Has a chymotrypsin-like activity. Plays a major role in the degradation of misfolded proteins. In Acorus gramineus (Dwarf sweet flag), this protein is ATP-dependent Clp protease proteolytic subunit.